Reading from the N-terminus, the 100-residue chain is Apolipoprotein C-II (100 aa).

Residues 1-22 (MDSRFLLALFLVLLVLGCEVQA) form the signal peptide. Residues 66–74 (SVDEKLRDM) form a lipid binding region. The interval 78-100 (SSAAMTTYAIIFTDQILTLLKGE) is lipoprotein lipase cofactor.

It belongs to the apolipoprotein C2 family. In terms of processing, proapolipoprotein C-II is synthesized as a sialic acid containing glycoprotein which is subsequently desialylated prior to its proteolytic processing. Post-translationally, proapolipoprotein C-II, the major form found in plasma undergoes proteolytic cleavage of its N-terminal hexapeptide to generate the mature form apolipoprotein C-II, which occurs as the minor form in plasma.

It localises to the secreted. Functionally, component of chylomicrons, very low-density lipoproteins (VLDL), low-density lipoproteins (LDL), and high-density lipoproteins (HDL) in plasma. Plays an important role in lipoprotein metabolism as an activator of lipoprotein lipase. This chain is Apolipoprotein C-II (APOC2), found in Myodes glareolus (Bank vole).